We begin with the raw amino-acid sequence, 461 residues long: Phosphoglucosamine mutase (461 aa).

The active-site Phosphoserine intermediate is the Ser107. Mg(2+) is bound by residues Ser107, Asp254, Asp256, and Asp258. Ser107 is subject to Phosphoserine.

This sequence belongs to the phosphohexose mutase family. It depends on Mg(2+) as a cofactor. In terms of processing, activated by phosphorylation.

It carries out the reaction alpha-D-glucosamine 1-phosphate = D-glucosamine 6-phosphate. In terms of biological role, catalyzes the conversion of glucosamine-6-phosphate to glucosamine-1-phosphate. The polypeptide is Phosphoglucosamine mutase (Bifidobacterium longum subsp. infantis (strain ATCC 15697 / DSM 20088 / JCM 1222 / NCTC 11817 / S12)).